A 316-amino-acid chain; its full sequence is Palmitoyltransferase ZDHHC3-A (316 aa).

Residues 1-45 are Cytoplasmic-facing; that stretch reads MRSPVPRFRDVERQASGLQPPQCLPSCHERQSSMWFIKDACGIVC. The chain crosses the membrane as a helical span at residues 46–66; it reads AIITWFLVFFAEFVVLFVMLI. At 67-70 the chain is on the lumenal side; that stretch reads PSKN. A helical membrane pass occupies residues 71–91; that stretch reads LTYSLVNGTLFNSLAFLALAS. The Cytoplasmic portion of the chain corresponds to 92–169; the sequence is HFRAMCTDPG…NCVGENNQKY (78 aa). The DHHC domain occupies 124-175; that stretch reads VYKCPKCCSIKPDRAHHCSVCKRCIRKMDHHCPWVNNCVGENNQKYFVLFTM. The S-palmitoyl cysteine moiety is linked to residue cysteine 144. The active-site S-palmitoyl cysteine intermediate is the cysteine 155. The helical transmembrane segment at 170–190 threads the bilayer; the sequence is FVLFTMYICLISLHSLVMVVF. The Lumenal segment spans residues 191–212; that stretch reads HFLNCFEDDWTKCSTFSPPATV. The chain crosses the membrane as a helical span at residues 213–233; the sequence is ILLILLCFEGLLFLIFTSVMF. The Cytoplasmic portion of the chain corresponds to 234–316; sequence GTQVHSICTD…DVIEIPLEPH (83 aa).

It belongs to the DHHC palmitoyltransferase family. As to quaternary structure, monomer. Homooligomers. The monomeric form has a higher catalytic activity. Forms heterooligomers with zdhhc7. Autopalmitoylated.

Its subcellular location is the golgi apparatus membrane. The enzyme catalyses L-cysteinyl-[protein] + hexadecanoyl-CoA = S-hexadecanoyl-L-cysteinyl-[protein] + CoA. The catalysed reaction is L-cysteinyl-[protein] + tetradecanoyl-CoA = S-tetradecanoyl-L-cysteinyl-[protein] + CoA. It carries out the reaction L-cysteinyl-[protein] + octadecanoyl-CoA = S-octadecanoyl-L-cysteinyl-[protein] + CoA. In terms of biological role, golgi-localized palmitoyltransferase that catalyzes the addition of palmitate onto various protein substrates and regulates their association with membranes. Has no stringent fatty acid selectivity and in addition to palmitate can also transfer onto target proteins myristate from tetradecanoyl-CoA and stearate from octadecanoyl-CoA. This is Palmitoyltransferase ZDHHC3-A (zdhhc3a) from Danio rerio (Zebrafish).